Here is a 271-residue protein sequence, read N- to C-terminus: Glutamate racemase (271 aa).

Substrate is bound by residues 9 to 10 (DS) and 41 to 42 (YG). Cys-72 (proton donor/acceptor) is an active-site residue. 73–74 (NT) is a binding site for substrate. Cys-183 acts as the Proton donor/acceptor in catalysis. 184-185 (TH) lines the substrate pocket.

It belongs to the aspartate/glutamate racemases family.

It catalyses the reaction L-glutamate = D-glutamate. The protein operates within cell wall biogenesis; peptidoglycan biosynthesis. Functionally, provides the (R)-glutamate required for cell wall biosynthesis. The chain is Glutamate racemase from Exiguobacterium sibiricum (strain DSM 17290 / CCUG 55495 / CIP 109462 / JCM 13490 / 255-15).